A 285-amino-acid polypeptide reads, in one-letter code: Pyrroline-5-carboxylate reductase (285 aa).

The protein belongs to the pyrroline-5-carboxylate reductase family. Homotetramer.

The enzyme catalyses L-proline + NADP(+) = (S)-1-pyrroline-5-carboxylate + NADPH + 2 H(+). The catalysed reaction is L-proline + NAD(+) = (S)-1-pyrroline-5-carboxylate + NADH + 2 H(+). Its pathway is amino-acid biosynthesis; L-proline biosynthesis; L-proline from L-glutamate 5-semialdehyde: step 1/1. The polypeptide is Pyrroline-5-carboxylate reductase (Kluyveromyces lactis (strain ATCC 8585 / CBS 2359 / DSM 70799 / NBRC 1267 / NRRL Y-1140 / WM37) (Yeast)).